We begin with the raw amino-acid sequence, 243 residues long: uncharacterized protein (243 aa).

The protein localises to the nucleus. Its subcellular location is the nucleolus. This is an uncharacterized protein from Schizosaccharomyces pombe (strain 972 / ATCC 24843) (Fission yeast).